The primary structure comprises 503 residues: Cytochrome P450 monooxygenase lnbC (503 aa).

The helical transmembrane segment at 14–34 (VVLLLSSVWIAVHLVLAAYNV) threads the bilayer. 2 N-linked (GlcNAc...) asparagine glycosylation sites follow: N94 and N169. C446 provides a ligand contact to heme.

Belongs to the cytochrome P450 family. It depends on heme as a cofactor.

It localises to the membrane. It participates in secondary metabolite biosynthesis. In terms of biological role, cytochrome P450 monooxygenase; part of the lnb gene cluster that mediates the biosynthesis of diastereomeric piperazines. Lna and lnb clusters encode sets of enzymes that produce overlapping sets of previously undescribed metabolites such as piperazinomycin-like metabolites or morpholine. The lna and lnb biosynthetic pathways appear to be part of a signaling network that controls the formation of sclerotia, a resilient overwintering structure. One primary function of the non-canonical nonribosomal peptide synthetases lnaA and lnbA consists in the reduction of L-tyrosine. The presence in the clusters of tailoring enzymes such as the oxidoreductases lnaB, lnbB, lnaE or lnbE, as well as of the cytochrome P450 monooxygenases lnaC, lnaD, or lnbC, might explain formation of various diastereomeric piperazines. The chain is Cytochrome P450 monooxygenase lnbC from Aspergillus flavus (strain ATCC 200026 / FGSC A1120 / IAM 13836 / NRRL 3357 / JCM 12722 / SRRC 167).